A 1069-amino-acid polypeptide reads, in one-letter code: Structural polyprotein (1069 aa).

Residue D28 coordinates a divalent metal cation. Positions 504–534 are disordered; that stretch reads THPKLVPPTEREPNSTPDGHKITGAKTKDNT. Basic and acidic residues predominate over residues 512 to 534; that stretch reads TEREPNSTPDGHKITGAKTKDNT. The region spanning 558–791 is the Peptidase S50 domain; it reads ADLPISLLQT…AFQGWFYCGA (234 aa). S692 acts as the Nucleophile in catalysis. K729 is a catalytic residue. Disordered regions lie at residues 876–900 and 1031–1069; these read LPHEGSKSQRRKHGPAPESRESTRM and SGAAATFKPRNRRPAQEYQPRPPITSRAGRFLNISTTLS.

In terms of assembly, homotrimer. A central divalent metal stabilizes the VP2 trimer. As to quaternary structure, homodimer. Interacts (via C-terminus) with VP1 in the cytoplasm. Interacts with VP2. Specific enzymatic cleavages yield mature proteins. The capsid assembly seems to be regulated by polyprotein processing. The protease VP4 cleaves itself off the polyprotein, thus releasing pre-VP2 and VP3 within the infected cell. During capsid assembly, the C-terminus of pre-VP2 is further processed by VP4, giving rise to VP2, the external capsid protein and three small peptides that all stay closely associated with the capsid. In terms of processing, the N-termini of VP2 and VP3 are blocked.

The protein resides in the virion. The protein localises to the host cytoplasm. Capsid protein VP2 self assembles to form an icosahedral capsid with a T=13 symmetry, about 70 nm in diameter, and consisting of 260 VP2 trimers. The capsid encapsulates the genomic dsRNA. VP2 is also involved in attachment and entry into the host cell. Its function is as follows. The precursor of VP2 plays an important role in capsid assembly. First, pre-VP2 and VP2 oligomers assemble to form a procapsid. Then, the pre-VP2 intermediates may be processed into VP2 proteins by proteolytic cleavage mediated by VP4 to obtain the mature virion. The final capsid is composed of pentamers and hexamers but VP2 has a natural tendency to assemble into all-pentameric structures. Therefore pre-VP2 may be required to allow formation of the hexameric structures. In terms of biological role, protease VP4 is a serine protease that cleaves the polyprotein into its final products. Pre-VP2 is first partially cleaved, and may be completely processed by VP4 upon capsid maturation. Functionally, capsid protein VP3 plays a key role in virion assembly by providing a scaffold for the capsid made of VP2. May self-assemble to form a T=4-like icosahedral inner-capsid composed of at least 180 trimers. Plays a role in genomic RNA packaging by recruiting VP1 into the capsid and interacting with the dsRNA genome segments to form a ribonucleoprotein complex. Additionally, the interaction of the VP3 C-terminal tail with VP1 removes the inherent structural blockade of the polymerase active site. Thus, VP3 can also function as a transcriptional activator. Structural peptide 1 is a small peptide derived from pre-VP2 C-terminus. It destabilizes and perforates cell membranes, suggesting a role during entry. Its function is as follows. Structural peptide 2 is a small peptide derived from pre-VP2 C-terminus. It is not essential for the virus viability, but viral growth is affected when missing. In terms of biological role, structural peptide 3 is a small peptide derived from pre-VP2 C-terminus. It is not essential for the virus viability, but viral growth is affected when missing. Functionally, structural peptide 4 is a small peptide derived from pre-VP2 C-terminus. It is essential for the virus viability. The sequence is that of Structural polyprotein from Channa lucius (Forest snakehead).